The chain runs to 608 residues: MPKHSLEQIKEKITERSKKTRELYLENIFNPKNQPKIESLGCANIAHVTASMPEHLKMPLGSHKRKHFAIITAYNDMLSAHQPFKNYPDLIKKELQEHNAYASVASGVPAMCDGITQGYDGMELSLFSRDVIALSTAVGLSHNVFDGAFFLGVCDKIVPGLLIGALSFGNLASVFVPSGPMVSGIENYKKAKARQDFAMGKINREELLKVEMQSYHDVGTCTFYGTANSNQMMMEFMGLHVANSSFINPNNPLRKVLVEESAKRLASGKVLPLAKLIDEKSILNALIGLMATGGSTNHTLHLIAIARSCGVILNWDDFDAVSNLIPLLAKVYPNGSADVNAFEACGGLVFVIKELLKEGLLFEDTHTIMDTETQKGMQNYTKTPFLENNQLVYKDAINHSLNTDILRPVSDPFAANGGLKILKGNLGRAVIKISAIKDEHRKVKARAIVFKTQSEFLERFKNKELERDFVAVLPFQGPKSNGMPELHKLTTNLGALQDMGYKVALVTDGRMSGASGKVPSAIHLSPEGALNGAIIKIKDGDLIELDAPNNALNVLEKDFEKRGINPLFLETLENLEKPSFGLGRELFTSLRLNVNTAEEGGMSFGIKV.

The [4Fe-4S] cluster site is built by cysteine 154 and cysteine 221.

The protein belongs to the IlvD/Edd family. The cofactor is [4Fe-4S] cluster.

The enzyme catalyses 6-phospho-D-gluconate = 2-dehydro-3-deoxy-6-phospho-D-gluconate + H2O. Its pathway is carbohydrate metabolism; Entner-Doudoroff pathway. Catalyzes the dehydration of 6-phospho-D-gluconate to 2-dehydro-3-deoxy-6-phospho-D-gluconate. The sequence is that of Phosphogluconate dehydratase from Helicobacter pylori (strain ATCC 700392 / 26695) (Campylobacter pylori).